The primary structure comprises 154 residues: RING finger protein 11 (154 aa).

A compositionally biased stretch (polar residues) spans 1 to 12 (MGNCLKSPTSDD). Residues 1–52 (MGNCLKSPTSDDISLLHESQSDRASFGEGTEPDQEPPPPYQEQVPVPIYHPT) are disordered. Glycine 2 carries N-myristoyl glycine lipidation. Cysteine 4 is lipidated: S-palmitoyl cysteine. A phosphoserine mark is found at serine 14 and serine 25. Residues 37–40 (PPPY) carry the PPxY motif motif. The RING-type zinc finger occupies 99-140 (CVICMMDFVYGDPIRFLPCMHIYHLDCIDDWLMRSFTCPSCM). Threonine 135 bears the Phosphothreonine; by PKB/AKT1 mark.

In terms of assembly, interacts (when phosphorylated) with 14-3-3. Interacts with the E3 ubiquitin-ligases NEDD4, ITCH, SMURF2 and WWP1. Also interacts with the E2 ubiquitin-conjugating enzymes UBE2D1 and UBE2N, but neither with CDC34, nor with UBE2L3. Interacts with ZNF350, EPS15 and STAMBP. After TNF stimulation, interacts with TAX1BP1, TNFAIP3 and RIPK1; these interactions are transient and they are lost after 1 hour of stimulation with TNF. Interacts with GGA1. In terms of processing, ubiquitinated in the presence of ITCH, SMURF2 and UBE2D1, as well as WWP1. Phosphorylation by PKB/AKT1 may accelerate degradation by the proteasome. Post-translationally, acylation at both Gly-2 and Cys-4 is required for proper localization to the endosomes.

The protein resides in the early endosome. It localises to the recycling endosome. Its subcellular location is the cytoplasm. It is found in the nucleus. Functionally, essential component of a ubiquitin-editing protein complex, comprising also TNFAIP3, ITCH and TAX1BP1, that ensures the transient nature of inflammatory signaling pathways. Promotes the association of TNFAIP3 to RIPK1 after TNF stimulation. TNFAIP3 deubiquitinates 'Lys-63' polyubiquitin chains on RIPK1 and catalyzes the formation of 'Lys-48'-polyubiquitin chains. This leads to RIPK1 proteasomal degradation and consequently termination of the TNF- or LPS-mediated activation of NF-kappa-B. Recruits STAMBP to the E3 ubiquitin-ligase SMURF2 for ubiquitination, leading to its degradation by the 26S proteasome. This Mus musculus (Mouse) protein is RING finger protein 11 (Rnf11).